A 210-amino-acid polypeptide reads, in one-letter code: Histidine biosynthesis bifunctional protein HisIE (210 aa).

Positions 1-106 are phosphoribosyl-AMP cyclohydrolase; the sequence is MTKYKIDFSK…SCFNTEVPFS (106 aa). The segment at 107 to 210 is phosphoribosyl-ATP pyrophosphohydrolase; the sequence is VQTLAQTVQD…KGERQNIEQW (104 aa).

In the N-terminal section; belongs to the PRA-CH family. The protein in the C-terminal section; belongs to the PRA-PH family.

It localises to the cytoplasm. It carries out the reaction 1-(5-phospho-beta-D-ribosyl)-ATP + H2O = 1-(5-phospho-beta-D-ribosyl)-5'-AMP + diphosphate + H(+). The enzyme catalyses 1-(5-phospho-beta-D-ribosyl)-5'-AMP + H2O = 1-(5-phospho-beta-D-ribosyl)-5-[(5-phospho-beta-D-ribosylamino)methylideneamino]imidazole-4-carboxamide. It participates in amino-acid biosynthesis; L-histidine biosynthesis; L-histidine from 5-phospho-alpha-D-ribose 1-diphosphate: step 2/9. It functions in the pathway amino-acid biosynthesis; L-histidine biosynthesis; L-histidine from 5-phospho-alpha-D-ribose 1-diphosphate: step 3/9. The chain is Histidine biosynthesis bifunctional protein HisIE (hisI) from Staphylococcus aureus (strain Mu50 / ATCC 700699).